Here is a 1108-residue protein sequence, read N- to C-terminus: MSSLSRELVFLILQFLEEEKFKESVHRLEKESGFFFNTKYFDEKVLAGEWDDVETYLSGFTKVDDNRYSMKIFFEIRKQKYLEALDRQEKAKAVEILVQDLRVFSTFNEELYKEITQLLTLQNFRENEQLSKYGDTKTARGIMLGELKKLIEANPLFRDKLMFPTLRSSRLRTLINQSLNWQHQLCKNPRPNPDIKTLFTDHTCTLPNGPLAPSAVNQPVTTLTKPAAYPSLGPHVPFPPGPAAANAGALASWMAAASGASAVQAAVVTPALMPQPQNQMSILKRPRTPPATPGIVDYQNPDHELMKRLRPAPSVEEVTYPAPRQQAPWSLEDLPTKAALALHQGSTVTSMEFYPMQNTLLLVGSATGEITLWELAARERLVSRPFKIWDMSNCSHQFQALIAKETPISVTRVAWSPDGNFIGVAFTKHLIQLYAFSGPNDLRQHTEIDAHVGAVNDLAFANPNRQLCVITCGDDKLIKVWDVSGRKHFTFEGHDAPVYSICPHYKENIQFIFSTAIDGKIKAWLYDNLGSRVDYDAPGKWCTRMLYSADGTRLFSCGTSKDGDSFLVEWNESEGSIKRTYKEFQKKLAGVVQFDTSKNHFLAVGEDGQIKFWDMNNINVLTSTDAEGGLPALPHLRFNKDGNLLAVTTADNGFKILANPAGFRSLRAMETPASETMRTPVDFKAVPGAPVASVNCKVERGSPVRHSQMLNGVDPSKSRIDDSTDKPKSWQLAEILDPSQCFQATLPDTAGSSTKVVQLLYTNSGAGILALGSNGIQRLWKWVPNEQNPSGKATATVVPQHWQPNSGLLMTNDVSGVNLENAAPCIALSKNDSYVMSAAGGKVSLFNMMTFKVMTTFMPPPPASTFLAFHPQDNNVIAIGMEDSTIHIYNVRVDEVKSKLKGHQKRITGLAFSTALNILVSSGADAQICFWSIDTWEKRKSVAIQMPAGKAANGDTRVQFHVDQLRILVVHETQLAVFDASKMECIRQWIPQDSLSAPISSAVYACNSQLIYTTFRDGNIGVFDADSLRLRCRISPSAYLPQGNQGLSPLVVAAHPQDPNQFAVGLNDGSVKMMEPTEGEGKWGMIPPSEAINSPSTTSNQTPEQLQR.

The region spanning 4–36 (LSRELVFLILQFLEEEKFKESVHRLEKESGFFF) is the LisH domain. A CTLH domain is found at 34 to 92 (FFFNTKYFDEKVLAGEWDDVETYLSGFTKVDDNRYSMKIFFEIRKQKYLEALDRQEKAK). Ser214 bears the Phosphoserine mark. 6 WD repeats span residues 343 to 383 (HQGS…RLVS), 405 to 444 (ETPISVTRVAWSPDGNFIGVAFTKHLIQLYAFSGPNDLRQ), 450 to 491 (AHVG…HFTF), 493 to 534 (GHDA…SRVD), 583 to 623 (EFQK…VLTS), and 628 to 667 (GGLPALPHLRFNKDGNLLAVTTADNGFKILANPAGFRSLR). The disordered stretch occupies residues 706-725 (HSQMLNGVDPSKSRIDDSTD). A compositionally biased stretch (basic and acidic residues) spans 716-725 (SKSRIDDSTD). WD repeat units follow at residues 751–790 (GSSTKVVQLLYTNSGAGILALGSNGIQRLWKWVPNEQNPS), 818–856 (NLENAAPCIALSKNDSYVMSAAGGKVSLFNMMTFKVMTT), 859–899 (PPPP…VKSK), 902–941 (GHQKRITGLAFSTALNILVSSGADAQICFWSIDTWEKRKS), and 994–1033 (SLSAPISSAVYACNSQLIYTTFRDGNIGVFDADSLRLRCR). Residues 1084-1108 (GMIPPSEAINSPSTTSNQTPEQLQR) are disordered. Residues 1091-1108 (AINSPSTTSNQTPEQLQR) show a composition bias toward polar residues.

In terms of assembly, tetramer. Interacts with NINJA/AFPH2. Interacts with SMXL6. Interacts with SPL (via EAR motif). Interacts with SPEAR3/TIE1.

It localises to the nucleus. Its function is as follows. Transcriptional corepressor. Negative regulator of jasmonate responses. This chain is Topless-related protein 3 (TPR3), found in Arabidopsis thaliana (Mouse-ear cress).